A 379-amino-acid chain; its full sequence is MSEGNIEPHGGRLISRLYSGDASGMEKAAISQELASDVENIADGIFSPLEGFLGRNDFEAVLEKGRLADGTAWTIPIVFDADAAEAARIKAAGDVLLEDPSGSKVAVLHAEEEYPFDKKAAAARVYGTDDAAHPGVSRMLSMKERLVGGRIDLVDRPEKTEIRRLRMSPVETRHAFAESGWKTTVAFQTRNPPHVAHEMLQKTSITTRDGVFVNPIVGRKKPGDFADEVIVKCYEEMIKHYYPENRCRLGTLHTEMRYAGPREAIHHGIMRQNYGCTHIIIGRDHAGVGKYYDPFAAHRIFDDYPDLGITPIFFPAFFYCRKCLTYTNPKACPHGEGEREQISGTALRDLIRAGKAPSEYILRPEVARIILEHPRPFID.

Belongs to the sulfate adenylyltransferase family.

It catalyses the reaction sulfate + ATP + H(+) = adenosine 5'-phosphosulfate + diphosphate. The protein operates within sulfur metabolism; hydrogen sulfide biosynthesis; sulfite from sulfate: step 1/3. The protein is Sulfate adenylyltransferase of Cenarchaeum symbiosum (strain A).